A 160-amino-acid polypeptide reads, in one-letter code: MAEKTYPMTLEEKEKLEKELEELKLVRRPEVVERIKIARSYGDLSENSEYEAAKDEQAFVEGQISSLETKIRYAEIVNSDAVAQDEVAIGKTVTIQEIGEDEEEVYIIVGSAGADAFAGKVSNESPIGQDLIGKKTGDTATIETPVGSYDVKILKVEKTA.

A coiled-coil region spans residues 1-72 (MAEKTYPMTL…QISSLETKIR (72 aa)).

The protein belongs to the GreA/GreB family.

In terms of biological role, necessary for efficient RNA polymerase transcription elongation past template-encoded arresting sites. The arresting sites in DNA have the property of trapping a certain fraction of elongating RNA polymerases that pass through, resulting in locked ternary complexes. Cleavage of the nascent transcript by cleavage factors such as GreA or GreB allows the resumption of elongation from the new 3'terminus. GreA releases sequences of 2 to 3 nucleotides. This is Transcription elongation factor GreA from Streptococcus pneumoniae (strain Hungary19A-6).